We begin with the raw amino-acid sequence, 101 residues long: NAD(P)H-quinone oxidoreductase subunit 4L, chloroplastic (101 aa).

3 helical membrane passes run 2 to 22 (ILEHVLVLSAYLFLIGLYGLI), 32 to 52 (MCLELILNAVNMNFVTFSDFF), and 61 to 81 (IFCIFVIAIAAAEAAIGLAIV).

The protein belongs to the complex I subunit 4L family. NDH is composed of at least 16 different subunits, 5 of which are encoded in the nucleus.

The protein localises to the plastid. It localises to the chloroplast thylakoid membrane. It carries out the reaction a plastoquinone + NADH + (n+1) H(+)(in) = a plastoquinol + NAD(+) + n H(+)(out). The catalysed reaction is a plastoquinone + NADPH + (n+1) H(+)(in) = a plastoquinol + NADP(+) + n H(+)(out). Functionally, NDH shuttles electrons from NAD(P)H:plastoquinone, via FMN and iron-sulfur (Fe-S) centers, to quinones in the photosynthetic chain and possibly in a chloroplast respiratory chain. The immediate electron acceptor for the enzyme in this species is believed to be plastoquinone. Couples the redox reaction to proton translocation, and thus conserves the redox energy in a proton gradient. This Lepidium virginicum (Virginia pepperweed) protein is NAD(P)H-quinone oxidoreductase subunit 4L, chloroplastic.